The chain runs to 598 residues: F-box/WD repeat-containing protein 8 (598 aa).

The residue at position 1 (methionine 1) is an N-acetylmethionine. The tract at residues 17 to 93 (LAQAQAPKKR…RSPLAREGAG (77 aa)) is disordered. Over residues 29-40 (PEAAERRARRPE) the composition is skewed to basic and acidic residues. Low complexity predominate over residues 61 to 71 (EGAGRPPAARA). Phosphoserine occurs at positions 83 and 85. The F-box domain occupies 113–159 (PFFDIQLPYELAINIFQYLDRKELGRCAQVSKTWKVIAEDEVLWYRL). 8 WD repeats span residues 201–250 (AVSE…LESE), 259–299 (QPNV…FEHD), 300–340 (ARIQ…AEFE), 341–383 (VPKL…LLYA), 384–429 (HGPP…LKLG), 430–475 (NVLR…SAHQ), 476–513 (LRVS…EVYS), and 514–561 (GHPV…AYEF).

In terms of assembly, component of the Cul7-RING(FBXW8) complex consisting of CUL7, RBX1, SKP1 and FBXW8; within the complex interacts with CUL7 and SKP1. Interacts with GLMN isoform 1. Interacts with OBSL1, CUL1, CUL2, CCT6B, PFDN5, CCT2, CCT3, CCT6A, CCT7, VBP1, CCDC8, ARF1, TRIP13, PDCD5 and GORASP1. Interacts with MAP4K1/HPK1 (when autophosphorylated). Associated component of the 3M complex. Interacts with POUF51 (when phosphorylated on 'Ser-355'). Phosphorylation at Ser-85 by mTORC2 promotes FBXW8 stabilization, allowing its translocation to the cytosol in response to insulin.

The protein resides in the cytoplasm. The protein localises to the perinuclear region. Its subcellular location is the golgi apparatus. It functions in the pathway protein modification; protein ubiquitination. Substrate-recognition component of the Cul7-RING(FBXW8) ubiquitin ligase complex, which mediates the ubiquitination and subsequent proteasomal degradation of target proteins. The Cul7-RING(FBXW8) complex mediates ubiquitination and consequent degradation of GORASP1, acting as a component of the ubiquitin ligase pathway that regulates Golgi morphogenesis and dendrite patterning in brain. Mediates ubiquitination and degradation of IRS1 in a mTOR-dependent manner: the Cul7-RING(FBXW8) complex recognizes and binds IRS1 previously phosphorylated by S6 kinase (RPS6KB1 or RPS6KB2). The Cul7-RING(FBXW8) complex also mediates ubiquitination of MAP4K1/HPK1: recognizes and binds autophosphorylated MAP4K1/HPK1, leading to its degradation, thereby affecting cell proliferation and differentiation. The Cul7-RING(FBXW8) complex also mediates ubiquitination of phosphorylated cyclin-D1 (CCND1). The Cul7-RING(FBXW8) complex is however not a major regulator of CCND1 stability during the G1/S transition. Associated component of the 3M complex, suggesting that it mediates some of 3M complex functions. This Homo sapiens (Human) protein is F-box/WD repeat-containing protein 8.